The following is a 65-amino-acid chain: Small ribosomal subunit protein uS10 (65 aa).

This sequence belongs to the universal ribosomal protein uS10 family. As to quaternary structure, part of the 30S ribosomal subunit.

In terms of biological role, involved in the binding of tRNA to the ribosomes. The protein is Small ribosomal subunit protein uS10 (rps10) of Desulfurococcus mucosus (Desulfurococcus mobilis).